The chain runs to 528 residues: Peptide chain release factor 3 (528 aa).

The tr-type G domain maps to 10-279 (AKRRTFAIIS…GLVEWAPAPM (270 aa)). Residues 19 to 26 (SHPDAGKT), 87 to 91 (DTPGH), and 141 to 144 (NKLD) contribute to the GTP site.

The protein belongs to the TRAFAC class translation factor GTPase superfamily. Classic translation factor GTPase family. PrfC subfamily.

It is found in the cytoplasm. Functionally, increases the formation of ribosomal termination complexes and stimulates activities of RF-1 and RF-2. It binds guanine nucleotides and has strong preference for UGA stop codons. It may interact directly with the ribosome. The stimulation of RF-1 and RF-2 is significantly reduced by GTP and GDP, but not by GMP. The protein is Peptide chain release factor 3 of Escherichia coli O1:K1 / APEC.